Here is a 510-residue protein sequence, read N- to C-terminus: MIWHVQNENFILDSTRIFMKAFHLLLFNGSFIFPECILIFGLILLLMIDLTSDQKDRPWFYFISSTSLVISITALLFRWREEPIISFSGNFQTNNFNEIFQFLILLCSTLCIPLSVEYIECTEMAITEFLLFVLTATLGGMFLCGANDLITIFVALECFSLCSYLLSGYTKRDLRSNEATMKYLLMGGASSSILVLGFSWLYGLSGGEIELQEIVNGLINTQMYNSPGISIALIFITVGLGFKLSLAPFHQWTPDVYEGSPTPVVAFLSVTSKVAALALATRILDIPFYFSSNEWHLLLEILAILSMILGNLLAITQTSMKRMLAYSSIGQIGYVIIGIIVGDSNDGYASMITYMLFYISMNLGTFACIVLFGLRTGTDNIRDYAGLYTKDPFLALSLALCLLSLGGLPPLAGFFGKLYLFWCGWQAGLYFLVSIGLLTSVLSIYYYLKIIKLLMTGRNQEITPYVRNYRRSPLRSNNSIELSMTVCVIASTILGISMNPILAIAQDTLF.

The next 14 helical transmembrane spans lie at phenylalanine 31–threonine 51, tryptophan 59–tryptophan 79, isoleucine 99–isoleucine 119, methionine 124–cysteine 144, leucine 149–tyrosine 169, leucine 184–leucine 204, isoleucine 229–phenylalanine 249, proline 261–threonine 281, tryptophan 295–isoleucine 315, methionine 323–aspartate 343, tyrosine 354–leucine 374, alanine 395–phenylalanine 415, leucine 418–leucine 438, and methionine 484–isoleucine 504.

The protein belongs to the complex I subunit 2 family. In terms of assembly, NDH is composed of at least 16 different subunits, 5 of which are encoded in the nucleus.

The protein resides in the plastid. It localises to the chloroplast thylakoid membrane. It carries out the reaction a plastoquinone + NADH + (n+1) H(+)(in) = a plastoquinol + NAD(+) + n H(+)(out). It catalyses the reaction a plastoquinone + NADPH + (n+1) H(+)(in) = a plastoquinol + NADP(+) + n H(+)(out). NDH shuttles electrons from NAD(P)H:plastoquinone, via FMN and iron-sulfur (Fe-S) centers, to quinones in the photosynthetic chain and possibly in a chloroplast respiratory chain. The immediate electron acceptor for the enzyme in this species is believed to be plastoquinone. Couples the redox reaction to proton translocation, and thus conserves the redox energy in a proton gradient. This is NAD(P)H-quinone oxidoreductase subunit 2 A, chloroplastic from Saccharum hybrid (Sugarcane).